Reading from the N-terminus, the 330-residue chain is Aspartate--ammonia ligase (330 aa).

Belongs to the class-II aminoacyl-tRNA synthetase family. AsnA subfamily.

It localises to the cytoplasm. It catalyses the reaction L-aspartate + NH4(+) + ATP = L-asparagine + AMP + diphosphate + H(+). It functions in the pathway amino-acid biosynthesis; L-asparagine biosynthesis; L-asparagine from L-aspartate (ammonia route): step 1/1. In Shigella boydii serotype 18 (strain CDC 3083-94 / BS512), this protein is Aspartate--ammonia ligase.